Reading from the N-terminus, the 430-residue chain is MKTTIAEVNQYVGQEVTIGAWLANKRSSGKIAFLQLRDGTGFIQGVVEKANVSEEVFQRAKTLTQETSLYVTGTVRVDERSPFGYELSVTNIQVINEAVDYPITPKEHGVEFLMDHRHLWLRSRRQHAIMKIRNELIRATYEFFNERGFVKVDAPILTGSAPEGTTELFHTKYFDEDAYLSQSGQLYMEAAAMALGKVFSFGPTFRAEKSKTRRHLIEFWMIEPEMAFYEFEDNLRLQEEYVSYLVQSVLSRCQLELGRLGRDVTKLELVKPPFPRLTYDEAIKLLHDKGFTDIEWGDDFGAPHETAIAESFDKPVFITHYPTSLKPFYMQPDPNRPDVVLCADLIAPEGYGEIIGGSERIHDYELLKQRLEEHHLPLEAYEWYLDLRKYGSVPHSGFGLGLERTVAWICGVEHVRETIPFPRLLNRLYP.

Belongs to the class-II aminoacyl-tRNA synthetase family. As to quaternary structure, homodimer.

It is found in the cytoplasm. The catalysed reaction is tRNA(Asn) + L-asparagine + ATP = L-asparaginyl-tRNA(Asn) + AMP + diphosphate + H(+). The chain is Asparagine--tRNA ligase from Geobacillus thermodenitrificans (strain NG80-2).